The primary structure comprises 246 residues: Ribonuclease PH (246 aa).

Phosphate is bound by residues Arg91 and 129 to 131 (GTR).

Belongs to the RNase PH family. In terms of assembly, homohexameric ring arranged as a trimer of dimers.

The enzyme catalyses tRNA(n+1) + phosphate = tRNA(n) + a ribonucleoside 5'-diphosphate. In terms of biological role, phosphorolytic 3'-5' exoribonuclease that plays an important role in tRNA 3'-end maturation. Removes nucleotide residues following the 3'-CCA terminus of tRNAs; can also add nucleotides to the ends of RNA molecules by using nucleoside diphosphates as substrates, but this may not be physiologically important. Probably plays a role in initiation of 16S rRNA degradation (leading to ribosome degradation) during starvation. The sequence is that of Ribonuclease PH from Paraburkholderia xenovorans (strain LB400).